Here is a 214-residue protein sequence, read N- to C-terminus: Cytochrome b (214 aa).

The next 4 membrane-spanning stretches (helical) occupy residues 31 to 51, 75 to 96, 111 to 131, and 176 to 196; these read FGSM…FLAI, WIMQ…YIHI, WLSG…GYVL, and FFAL…IHIL. Heme b contacts are provided by His81 and His95. Heme b is bound by residues His180 and His194. His199 provides a ligand contact to a ubiquinone.

It belongs to the cytochrome b family. The cytochrome bc1 complex contains 3 respiratory subunits (MT-CYB, CYC1 and UQCRFS1), 2 core proteins (UQCRC1 and UQCRC2) and probably 6 low-molecular weight proteins. Heme b is required as a cofactor.

It is found in the mitochondrion inner membrane. Component of the ubiquinol-cytochrome c reductase complex (complex III or cytochrome b-c1 complex) that is part of the mitochondrial respiratory chain. The b-c1 complex mediates electron transfer from ubiquinol to cytochrome c. Contributes to the generation of a proton gradient across the mitochondrial membrane that is then used for ATP synthesis. This chain is Cytochrome b (MT-CYB), found in Agkistrodon contortrix contortrix (Southern copperhead).